The chain runs to 232 residues: Enolase-phosphatase E1 (232 aa).

It belongs to the HAD-like hydrolase superfamily. MasA/MtnC family. As to quaternary structure, monomer. It depends on Mg(2+) as a cofactor.

The catalysed reaction is 5-methylsulfanyl-2,3-dioxopentyl phosphate + H2O = 1,2-dihydroxy-5-(methylsulfanyl)pent-1-en-3-one + phosphate. The protein operates within amino-acid biosynthesis; L-methionine biosynthesis via salvage pathway; L-methionine from S-methyl-5-thio-alpha-D-ribose 1-phosphate: step 3/6. It participates in amino-acid biosynthesis; L-methionine biosynthesis via salvage pathway; L-methionine from S-methyl-5-thio-alpha-D-ribose 1-phosphate: step 4/6. In terms of biological role, bifunctional enzyme that catalyzes the enolization of 2,3-diketo-5-methylthiopentyl-1-phosphate (DK-MTP-1-P) into the intermediate 2-hydroxy-3-keto-5-methylthiopentenyl-1-phosphate (HK-MTPenyl-1-P), which is then dephosphorylated to form the acireductone 1,2-dihydroxy-3-keto-5-methylthiopentene (DHK-MTPene). The chain is Enolase-phosphatase E1 from Xanthomonas campestris pv. campestris (strain B100).